The sequence spans 436 residues: DNA primase DnaG (436 aa).

Positions 169-243 (DSIIVVEGRA…DIDYVARAPY (75 aa)) constitute a Toprim domain. Positions 175, 217, and 219 each coordinate Mg(2+).

It belongs to the archaeal DnaG primase family. Forms a ternary complex with MCM helicase and DNA. Mg(2+) is required as a cofactor.

It carries out the reaction ssDNA + n NTP = ssDNA/pppN(pN)n-1 hybrid + (n-1) diphosphate.. Functionally, RNA polymerase that catalyzes the synthesis of short RNA molecules used as primers for DNA polymerase during DNA replication. This is DNA primase DnaG from Methanococcus maripaludis (strain DSM 14266 / JCM 13030 / NBRC 101832 / S2 / LL).